Here is a 551-residue protein sequence, read N- to C-terminus: Formate--tetrahydrofolate ligase (551 aa).

65–72 (TPAGEGKT) provides a ligand contact to ATP.

This sequence belongs to the formate--tetrahydrofolate ligase family.

The catalysed reaction is (6S)-5,6,7,8-tetrahydrofolate + formate + ATP = (6R)-10-formyltetrahydrofolate + ADP + phosphate. Its pathway is one-carbon metabolism; tetrahydrofolate interconversion. This is Formate--tetrahydrofolate ligase from Thermosipho melanesiensis (strain DSM 12029 / CIP 104789 / BI429).